We begin with the raw amino-acid sequence, 60 residues long: Large ribosomal subunit protein bL32 (60 aa).

The interval 1–21 (MAVPARHTSKAKKNKRRTHYK) is disordered. Residues 7-20 (HTSKAKKNKRRTHY) are compositionally biased toward basic residues.

The protein belongs to the bacterial ribosomal protein bL32 family.

This chain is Large ribosomal subunit protein bL32, found in Streptococcus uberis (strain ATCC BAA-854 / 0140J).